Reading from the N-terminus, the 433-residue chain is 3-phosphoshikimate 1-carboxyvinyltransferase (433 aa).

3-phosphoshikimate is bound by residues lysine 22, serine 23, and arginine 27. Residue lysine 22 participates in phosphoenolpyruvate binding. Phosphoenolpyruvate contacts are provided by glycine 94 and arginine 123. The 3-phosphoshikimate site is built by serine 168, glutamine 170, aspartate 319, and lysine 346. Glutamine 170 is a binding site for phosphoenolpyruvate. The active-site Proton acceptor is aspartate 319. Arginine 350 and arginine 392 together coordinate phosphoenolpyruvate.

This sequence belongs to the EPSP synthase family. As to quaternary structure, monomer.

Its subcellular location is the cytoplasm. It catalyses the reaction 3-phosphoshikimate + phosphoenolpyruvate = 5-O-(1-carboxyvinyl)-3-phosphoshikimate + phosphate. Its pathway is metabolic intermediate biosynthesis; chorismate biosynthesis; chorismate from D-erythrose 4-phosphate and phosphoenolpyruvate: step 6/7. Catalyzes the transfer of the enolpyruvyl moiety of phosphoenolpyruvate (PEP) to the 5-hydroxyl of shikimate-3-phosphate (S3P) to produce enolpyruvyl shikimate-3-phosphate and inorganic phosphate. This Roseiflexus sp. (strain RS-1) protein is 3-phosphoshikimate 1-carboxyvinyltransferase.